The following is a 262-amino-acid chain: Flap endonuclease Xni (262 aa).

Residue aspartate 112 coordinates Mg(2+). Residues 171–258 (QQLNDYWAIT…GFNLKDLRYT (88 aa)) enclose the 5'-3' exonuclease domain. Residues isoleucine 179, valine 190, and isoleucine 193 each contribute to the K(+) site. Residues 192 to 197 (GIGSKG) are interaction with DNA.

It belongs to the Xni family. Requires Mg(2+) as cofactor. K(+) is required as a cofactor.

Functionally, has flap endonuclease activity. During DNA replication, flap endonucleases cleave the 5'-overhanging flap structure that is generated by displacement synthesis when DNA polymerase encounters the 5'-end of a downstream Okazaki fragment. This chain is Flap endonuclease Xni, found in Psychromonas ingrahamii (strain DSM 17664 / CCUG 51855 / 37).